Consider the following 245-residue polypeptide: 1-(5-phosphoribosyl)-5-[(5-phosphoribosylamino)methylideneamino] imidazole-4-carboxamide isomerase (245 aa).

Aspartate 8 functions as the Proton acceptor in the catalytic mechanism. The Proton donor role is filled by aspartate 130.

Belongs to the HisA/HisF family.

The protein localises to the cytoplasm. The catalysed reaction is 1-(5-phospho-beta-D-ribosyl)-5-[(5-phospho-beta-D-ribosylamino)methylideneamino]imidazole-4-carboxamide = 5-[(5-phospho-1-deoxy-D-ribulos-1-ylimino)methylamino]-1-(5-phospho-beta-D-ribosyl)imidazole-4-carboxamide. It participates in amino-acid biosynthesis; L-histidine biosynthesis; L-histidine from 5-phospho-alpha-D-ribose 1-diphosphate: step 4/9. The polypeptide is 1-(5-phosphoribosyl)-5-[(5-phosphoribosylamino)methylideneamino] imidazole-4-carboxamide isomerase (Pseudomonas putida (strain GB-1)).